Here is a 911-residue protein sequence, read N- to C-terminus: Valine--tRNA ligase (911 aa).

Positions 53-63 (PNVTGTLHLGH) match the 'HIGH' region motif. The 'KMSKS' region motif lies at 533-537 (KMSKS). Residue Lys-536 coordinates ATP. Positions 845-910 (KEIERLTKEL…NRLAMLRSMQ (66 aa)) form a coiled coil.

Belongs to the class-I aminoacyl-tRNA synthetase family. ValS type 1 subfamily. As to quaternary structure, monomer.

It localises to the cytoplasm. The catalysed reaction is tRNA(Val) + L-valine + ATP = L-valyl-tRNA(Val) + AMP + diphosphate. Catalyzes the attachment of valine to tRNA(Val). As ValRS can inadvertently accommodate and process structurally similar amino acids such as threonine, to avoid such errors, it has a 'posttransfer' editing activity that hydrolyzes mischarged Thr-tRNA(Val) in a tRNA-dependent manner. The polypeptide is Valine--tRNA ligase (Symbiobacterium thermophilum (strain DSM 24528 / JCM 14929 / IAM 14863 / T)).